Here is a 207-residue protein sequence, read N- to C-terminus: Nitrophorin-1 (207 aa).

A signal peptide spans 1 to 23; that stretch reads MKSYTALLAVAILCLFAAVGVSG. 2 cysteine pairs are disulfide-bonded: cysteine 25–cysteine 145 and cysteine 64–cysteine 194. Position 82 (histidine 82) interacts with heme.

The protein belongs to the calycin superfamily. Nitrophorin family. In terms of tissue distribution, salivary gland (at protein level).

It is found in the secreted. Heme-based protein that deliver nitric oxide gas (NO) to the victim while feeding, resulting in vasodilation and inhibition of platelet aggregation. Reversibly binds nitric oxide (NO). Also binds tightly to histamine, which is released by the host to induce wound healing. The protein is Nitrophorin-1 of Rhodnius prolixus (Triatomid bug).